A 412-amino-acid chain; its full sequence is MQSWSAPAIPVVPGRGPALRLFDSADRQVRPVTPGPTATMYVCGITPYDATHLGHAATYLTFDLVHRLWLDAGHTVQYVQNVTDVDDPLFERAERDGIDWRTLGDRETQLFREDMAALRVLPPHDYVAATDAIAEVVEMVEKLLASGAAYIVEDAEYPDVYFRADATAQFGYESGYDRDTMLTLFAERGGDPDRPGKSDQLDALLWRAERPGEPSWPSPFGRGRPGWHVECSAIALTRIGTGLDIQGGGSDLIFPHHEYSAAHAESVTGERRFARHYVHTGMIGWDGHKMSKSRGNLVLVSQLRAQGVDPSAIRLGLFSGHYREDRFWSNEVLDEANARLARWRSATALPEAPDATDVIARVRQYLADDLDTPKALAALDGWCTDALSYGGHDTESPRLVATTVDALLGVDL.

Cysteine 43 is a Zn(2+) binding site. L-cysteinyl-5'-AMP is bound by residues 43-46, threonine 58, and 81-83; these read CGIT and NVT. The short motif at 45-55 is the 'HIGH' region element; the sequence is ITPYDATHLGH. The 'ERGGDP' region motif lies at 187–192; sequence ERGGDP. Tryptophan 227 contacts L-cysteinyl-5'-AMP. Cysteine 231 is a Zn(2+) binding site. Residue 249–251 participates in L-cysteinyl-5'-AMP binding; the sequence is GSD. Histidine 256 is a binding site for Zn(2+). Position 283 (isoleucine 283) interacts with L-cysteinyl-5'-AMP. The 'KMSKS' region signature appears at 289–293; it reads KMSKS.

It belongs to the class-I aminoacyl-tRNA synthetase family. MshC subfamily. Monomer. The cofactor is Zn(2+).

The enzyme catalyses 1D-myo-inositol 2-amino-2-deoxy-alpha-D-glucopyranoside + L-cysteine + ATP = 1D-myo-inositol 2-(L-cysteinylamino)-2-deoxy-alpha-D-glucopyranoside + AMP + diphosphate + H(+). Its function is as follows. Catalyzes the ATP-dependent condensation of GlcN-Ins and L-cysteine to form L-Cys-GlcN-Ins. The polypeptide is L-cysteine:1D-myo-inositol 2-amino-2-deoxy-alpha-D-glucopyranoside ligase (mshC) (Mycolicibacterium smegmatis (strain ATCC 700084 / mc(2)155) (Mycobacterium smegmatis)).